We begin with the raw amino-acid sequence, 1537 residues long: Isocyanide synthase-NRPS hybrid crmA (1537 aa).

The tract at residues 1 to 502 (MFHKEAGISH…CVKAGYAALF (502 aa)) is isocyanide synthase domain. The tract at residues 351 to 391 (PSVPVSPGMSSPSAASTSSSGASMQGSAATTPETHSPPTFT) is disordered. Positions 352–381 (SVPVSPGMSSPSAASTSSSGASMQGSAATT) are enriched in low complexity. Positions 382-391 (PETHSPPTFT) are enriched in polar residues. Residues 573–752 (EAINDPFCFL…GNLIPPREDW (180 aa)) form an adenylation region. Residues 941 to 1019 (SSAHSIEDNV…RLSAIIALLA (79 aa)) enclose the Carrier domain. Residue Ser-977 is modified to O-(pantetheine 4'-phosphoryl)serine. Residues 1293-1526 (RCLKTTMFLV…LEMLVTDEEF (234 aa)) are transferase.

In the N-terminal section; belongs to the isocyanide synthase family. This sequence in the C-terminal section; belongs to the NRP synthetase family.

It participates in secondary metabolite biosynthesis. Isocyanide synthase-NRPS hybrid; part of the crm gene cluster that mediates the biosynthesis of a yet unidentified copper-responsive metabolite. Converts valine into valine isocyanide that then contributes to two distinct biosynthetic pathways under copper-limiting conditions. Reaction of valine isocyanide with the imine intermediate of festuclavine results in formation of the amide bond in fumivaline A. In addition, valine isocyanide contributes to biosynthesis of a family of acylated sugar alcohols, the D-mannitol-derived fumicicolins. CrmA and associated products inhibit microbial growth from copper-starved A.fumigatus. This is Isocyanide synthase-NRPS hybrid crmA from Aspergillus fumigatus (strain ATCC MYA-4609 / CBS 101355 / FGSC A1100 / Af293) (Neosartorya fumigata).